Consider the following 207-residue polypeptide: Ribosomal RNA large subunit methyltransferase E (207 aa).

S-adenosyl-L-methionine is bound by residues glycine 60, tryptophan 62, aspartate 80, aspartate 96, and aspartate 121. The active-site Proton acceptor is lysine 161.

This sequence belongs to the class I-like SAM-binding methyltransferase superfamily. RNA methyltransferase RlmE family.

The protein localises to the cytoplasm. The enzyme catalyses uridine(2552) in 23S rRNA + S-adenosyl-L-methionine = 2'-O-methyluridine(2552) in 23S rRNA + S-adenosyl-L-homocysteine + H(+). In terms of biological role, specifically methylates the uridine in position 2552 of 23S rRNA at the 2'-O position of the ribose in the fully assembled 50S ribosomal subunit. This is Ribosomal RNA large subunit methyltransferase E from Ectopseudomonas mendocina (strain ymp) (Pseudomonas mendocina).